Consider the following 385-residue polypeptide: Putative mitochondrial carrier protein TRV_02148.2 (385 aa).

Solcar repeat units lie at residues S24–R124 and R130–R210. 5 helical membrane passes run G30–L47, A132–T150, W184–L207, Y263–I279, and V294–L310.

It belongs to the mitochondrial carrier (TC 2.A.29) family.

The protein localises to the mitochondrion inner membrane. Functionally, may function as a mitochondrial transporter. This Trichophyton verrucosum (strain HKI 0517) protein is Putative mitochondrial carrier protein TRV_02148.2.